The primary structure comprises 545 residues: Glucans biosynthesis protein G (545 aa).

An N-terminal signal peptide occupies residues 1 to 34 (MVSLLRCQSFKPSSSLICSLALSAAFALSSSAFA). Residues 38–60 (KPAENKPATPVVSPPKATAQPAN) form a disordered region.

Belongs to the OpgD/OpgG family.

Its subcellular location is the periplasm. It participates in glycan metabolism; osmoregulated periplasmic glucan (OPG) biosynthesis. In terms of biological role, involved in the biosynthesis of osmoregulated periplasmic glucans (OPGs). This Shewanella sp. (strain ANA-3) protein is Glucans biosynthesis protein G.